The chain runs to 251 residues: 3-dehydroquinate dehydratase (251 aa).

Residues 47-49 and Arg83 contribute to the 3-dehydroquinate site; that span reads EWR. His144 serves as the catalytic Proton donor/acceptor. Residue Lys171 is the Schiff-base intermediate with substrate of the active site. Positions 214, 233, and 237 each coordinate 3-dehydroquinate.

This sequence belongs to the type-I 3-dehydroquinase family. As to quaternary structure, homodimer.

It carries out the reaction 3-dehydroquinate = 3-dehydroshikimate + H2O. It participates in metabolic intermediate biosynthesis; chorismate biosynthesis; chorismate from D-erythrose 4-phosphate and phosphoenolpyruvate: step 3/7. Involved in the third step of the chorismate pathway, which leads to the biosynthesis of aromatic amino acids. Catalyzes the cis-dehydration of 3-dehydroquinate (DHQ) and introduces the first double bond of the aromatic ring to yield 3-dehydroshikimate. This Klebsiella pneumoniae subsp. pneumoniae (strain ATCC 700721 / MGH 78578) protein is 3-dehydroquinate dehydratase.